The chain runs to 308 residues: Elongation factor Ts (308 aa).

The interval 80-83 (TDFV) is involved in Mg(2+) ion dislocation from EF-Tu.

Belongs to the EF-Ts family.

Its subcellular location is the cytoplasm. Functionally, associates with the EF-Tu.GDP complex and induces the exchange of GDP to GTP. It remains bound to the aminoacyl-tRNA.EF-Tu.GTP complex up to the GTP hydrolysis stage on the ribosome. The polypeptide is Elongation factor Ts (Rhizobium etli (strain CIAT 652)).